Reading from the N-terminus, the 502-residue chain is Probable cytochrome P450 6a23 (502 aa).

Position 445 (Cys445) interacts with heme.

Belongs to the cytochrome P450 family. Requires heme as cofactor.

Its subcellular location is the endoplasmic reticulum membrane. It is found in the microsome membrane. In terms of biological role, may be involved in the metabolism of insect hormones and in the breakdown of synthetic insecticides. The chain is Probable cytochrome P450 6a23 (Cyp6a23) from Drosophila melanogaster (Fruit fly).